The primary structure comprises 333 residues: DNA repair and recombination protein RadA (333 aa).

Gly127–Thr134 is a binding site for ATP.

Belongs to the eukaryotic RecA-like protein family.

Functionally, involved in DNA repair and in homologous recombination. Binds and assemble on single-stranded DNA to form a nucleoprotein filament. Hydrolyzes ATP in a ssDNA-dependent manner and promotes DNA strand exchange between homologous DNA molecules. This Pyrobaculum aerophilum (strain ATCC 51768 / DSM 7523 / JCM 9630 / CIP 104966 / NBRC 100827 / IM2) protein is DNA repair and recombination protein RadA.